The following is a 317-amino-acid chain: Olfactory receptor-like protein OLF3 (317 aa).

At 1–25 (MGTGNQTWVREFVLLGLSSDWDTEV) the chain is on the extracellular side. A glycan (N-linked (GlcNAc...) asparagine) is linked at asparagine 5. Residues 26–49 (SLFVLFLITYMVTVLGNFLIILLI) form a helical membrane-spanning segment. The Cytoplasmic segment spans residues 50-57 (RLDSRLHT). A helical transmembrane segment spans residues 58-79 (PMYFFLTNLSLVDVSYATSIIP). At 80–100 (QMLAHLLAAHKAIPFVSCAAQ) the chain is on the extracellular side. A helical membrane pass occupies residues 101-120 (LFFSLGLGGIEFVLLAVMAY). Topologically, residues 121-139 (DRYVAVCDPLRYSVIMHGG) are cytoplasmic. A helical transmembrane segment spans residues 140-158 (LCTRLAITSWVSGSMNSLM). The Extracellular segment spans residues 159 to 196 (QTVITFQLPMCTNKYIDHISCELLAVVRLACVDTSSNE). Residues 197–219 (IAIMVSSIVLLMTPFCLVLLSYI) traverse the membrane as a helical segment. Residues 220–236 (QIISTILKIQSTEGRKK) are Cytoplasmic-facing. The helical transmembrane segment at 237-260 (AFHTCASHLTVVVLCYGMAIFTYI) threads the bilayer. Topologically, residues 261–272 (QPRSSPSVLQEK) are extracellular. A helical transmembrane segment spans residues 273-292 (LISLFYSVLTPMLNPMIYSV). The Cytoplasmic portion of the chain corresponds to 293-317 (RNKEVKGAWQKLLGQLTGITSKLAT).

It belongs to the G-protein coupled receptor 1 family.

The protein localises to the cell membrane. Functionally, putative odorant or sperm cell receptor. This Canis lupus familiaris (Dog) protein is Olfactory receptor-like protein OLF3.